Here is a 30-residue protein sequence, read N- to C-terminus: Methanobactin mb-OB3b (30 aa).

A propeptide spanning residues 1 to 19 (MTVKIAQKKVLPVIGRAAA) is cleaved from the precursor. Residues 20–21 (LC) constitute a cross-link (2-(3-methylbutanoyl)-5-hydroxyoxazole-4-carbothionic acid (Leu-Cys)). Positions 21 and 27 each coordinate Cu(2+). Cysteine 24 and cysteine 29 are joined by a disulfide. The proline 5-hydroxy-oxazole-4-carbothionic acid (Pro-Cys) cross-link spans 26 to 27 (PC).

As to quaternary structure, monomer. In the absence of copper, may exist as a dimer or an oligomer.

It is found in the secreted. It localises to the cytoplasm. It carries out the reaction 2 superoxide + 2 H(+) = H2O2 + O2. In terms of biological role, chalkophore involved in scavenging, uptake and suppression of toxicity of copper. Each apo-methanobactin (apo-mb) complexes 1 Cu(2+) or Cu(1+) ion to form Cu(1+)-mb (Cu-mb) which is then taken up by the cell. Enhances growth rate in the presence of copper and reduces growth lag upon exposition to elevated levels of copper. Cu-mb contributes to the switchover from soluble methane monooxygenase (sMMO) to the membrane-bound particulate MMO (pMMO) by inducing transcription of pMMO subunit A. It also stimulates the enzymatic activity of pMMO. In the absence of copper, binds other metal ions, like Zn(2+), Ag(1+), Au(3+), Co(2+), Cd(2+), Fe(3+), Hg(2+), Mn(2+), Ni(2+), Pb(2+) or U(6+), but not Ba(2+), Ca(2+), La(2+), Mg(2+) or Sr(2+). Uptake is an active process, which may involve TonB-dependent transporters, and as such does not involve porins. Cu-Mb can be taken up by other methanotrophic bacteria but not by E.coli. Has Cu-dependent superoxide dismutase-like activity. Shows reductant-dependent oxidase and hydrogen peroxide reductase activities. Reduces copper-levels in liver in a rat model of Wilson disease. This is Methanobactin mb-OB3b from Methylosinus trichosporium.